The primary structure comprises 250 residues: tRNA (guanine-N(7)-)-methyltransferase (250 aa).

S-adenosyl-L-methionine contacts are provided by E79, E104, D131, and D154. D154 is a catalytic residue. Residues K158, D190, and 228–231 (TKFE) contribute to the substrate site.

This sequence belongs to the class I-like SAM-binding methyltransferase superfamily. TrmB family.

The catalysed reaction is guanosine(46) in tRNA + S-adenosyl-L-methionine = N(7)-methylguanosine(46) in tRNA + S-adenosyl-L-homocysteine. Its pathway is tRNA modification; N(7)-methylguanine-tRNA biosynthesis. Catalyzes the formation of N(7)-methylguanine at position 46 (m7G46) in tRNA. This Actinobacillus pleuropneumoniae serotype 5b (strain L20) protein is tRNA (guanine-N(7)-)-methyltransferase.